The following is a 297-amino-acid chain: uncharacterized protein (297 aa).

E46 is an active-site residue.

Belongs to the PhzF family. In terms of assembly, homodimer and homotetramer.

This is an uncharacterized protein from Escherichia coli (strain K12).